The following is a 540-amino-acid chain: Chaperonin GroEL (540 aa).

Residues 30–33 (TLGP), lysine 51, 87–91 (DGTTT), glycine 415, 479–481 (NAA), and aspartate 495 contribute to the ATP site.

It belongs to the chaperonin (HSP60) family. In terms of assembly, forms a cylinder of 14 subunits composed of two heptameric rings stacked back-to-back. Interacts with the co-chaperonin GroES.

It localises to the cytoplasm. The catalysed reaction is ATP + H2O + a folded polypeptide = ADP + phosphate + an unfolded polypeptide.. Its function is as follows. Together with its co-chaperonin GroES, plays an essential role in assisting protein folding. The GroEL-GroES system forms a nano-cage that allows encapsulation of the non-native substrate proteins and provides a physical environment optimized to promote and accelerate protein folding. In Raoultella ornithinolytica (Klebsiella ornithinolytica), this protein is Chaperonin GroEL.